Reading from the N-terminus, the 610-residue chain is Serine/threonine-protein kinase RCK2 (610 aa).

Disordered stretches follow at residues 1–55 and 99–127; these read MLKI…QDKN and TSVP…SLSE. The span at 11 to 24 shows a compositional bias: basic and acidic residues; it reads KKPDQADLSQESKK. The segment covering 31-55 has biased composition (polar residues); that stretch reads RSSGTNNKDVSQITSSPKKSFQDKN. Serine 46 and serine 50 each carry phosphoserine. The Protein kinase domain occupies 163 to 478; that stretch reads YKLINKIGEG…IDQFLDDPWL (316 aa). Position 169-177 (169-177) interacts with ATP; sequence IGEGAFSKV. Residue serine 187 is modified to Phosphoserine. Lysine 201 is an ATP binding site. Aspartate 313 functions as the Proton acceptor in the catalytic mechanism. Threonine 350 carries the post-translational modification Phosphothreonine. The interval 493 to 506 is calmodulin-binding; it reads KKAGTSERRHPHKK. Phosphoserine is present on serine 520. The interval 541 to 564 is disordered; the sequence is EDRMGTRGGLGSLAEDEELEDSYS.

It belongs to the protein kinase superfamily. CAMK Ser/Thr protein kinase family. CaMK subfamily. Autophosphorylated. Phosphorylated by HOG1 at Ser-520 after osmotic stress.

The protein resides in the cytoplasm. The catalysed reaction is L-seryl-[protein] + ATP = O-phospho-L-seryl-[protein] + ADP + H(+). It carries out the reaction L-threonyl-[protein] + ATP = O-phospho-L-threonyl-[protein] + ADP + H(+). Activated by Ser-520 phosphorylation by HOG1. Functionally, serine/threonine-protein kinase involved in a signal transduction pathway that is activated by changes in the osmolarity of the extracellular environment. This chain is Serine/threonine-protein kinase RCK2 (RCK2), found in Saccharomyces cerevisiae (strain ATCC 204508 / S288c) (Baker's yeast).